Here is a 506-residue protein sequence, read N- to C-terminus: Catalase (506 aa).

Residues His-73 and Asn-146 contribute to the active site. Tyr-356 contributes to the heme binding site. Residues 504-506 carry the Microbody targeting signal motif; that stretch reads SKF.

This sequence belongs to the catalase family. In terms of assembly, homotetramer. It depends on heme as a cofactor.

It localises to the peroxisome matrix. The catalysed reaction is 2 H2O2 = O2 + 2 H2O. Its function is as follows. Catalyzes the degradation of hydrogen peroxide (H(2)O(2)) generated by peroxisomal oxidases to water and oxygen, thereby protecting cells from the toxic effects of hydrogen peroxide. This chain is Catalase (Cat), found in Drosophila melanogaster (Fruit fly).